The chain runs to 240 residues: Small ribosomal subunit protein uS3 (240 aa).

The KH type-2 domain occupies 39–108; it reads LRKFLKKKLY…ELILNIKEER (70 aa). Basic and acidic residues predominate over residues 213–224; sequence MNSDDTATPERK. A disordered region spans residues 213-240; it reads MNSDDTATPERKAPRRRKGRRNVNAKKN. Positions 225–240 are enriched in basic residues; that stretch reads APRRRKGRRNVNAKKN.

The protein belongs to the universal ribosomal protein uS3 family. Part of the 30S ribosomal subunit. Forms a tight complex with proteins S10 and S14.

Its function is as follows. Binds the lower part of the 30S subunit head. Binds mRNA in the 70S ribosome, positioning it for translation. This is Small ribosomal subunit protein uS3 from Nautilia profundicola (strain ATCC BAA-1463 / DSM 18972 / AmH).